The following is a 195-amino-acid chain: ATP-dependent Clp protease proteolytic subunit (195 aa).

S98 functions as the Nucleophile in the catalytic mechanism. H123 is a catalytic residue.

This sequence belongs to the peptidase S14 family. In terms of assembly, fourteen ClpP subunits assemble into 2 heptameric rings which stack back to back to give a disk-like structure with a central cavity, resembling the structure of eukaryotic proteasomes.

The protein localises to the cytoplasm. The enzyme catalyses Hydrolysis of proteins to small peptides in the presence of ATP and magnesium. alpha-casein is the usual test substrate. In the absence of ATP, only oligopeptides shorter than five residues are hydrolyzed (such as succinyl-Leu-Tyr-|-NHMec, and Leu-Tyr-Leu-|-Tyr-Trp, in which cleavage of the -Tyr-|-Leu- and -Tyr-|-Trp bonds also occurs).. Its function is as follows. Cleaves peptides in various proteins in a process that requires ATP hydrolysis. Has a chymotrypsin-like activity. Plays a major role in the degradation of misfolded proteins. This is ATP-dependent Clp protease proteolytic subunit from Staphylococcus haemolyticus (strain JCSC1435).